The sequence spans 779 residues: MAVTRQRVEIPELAHRHVDHQKILSQRSLKSTSPDGMRGLEWFYLVKGASSTPPEEVFMDDTSKCPFSGGKRVPANRDWWPTQLSIEMLHKNSGLSDPMGEEFDYAKEFKTLDLNAVIKDLTALMTDSQEWWPADFGHYGGLMIRMAWHSAGTYRITDGRGGAGAGQQRFAPLNSWPDNANLDKARRLLWPIKQKYGRKISWADLMVLAGNVALESMGFKTFGFAGGRADVWEPEELYWGPEGTWLGDERYSGERQLAEPLGAVQMGLIYVNPEGPNGKPDPIAAAKDIRETFFRMAMNDEETVALIAGGHTFGKTHGAGDPSLVGPEPEAGALEDQGLGWKSKHASGLAGDSITSGLEVTWTTTPTKWSNNFFENLFKYEWELTKSPGGANQWTAKGAEAIIPDAFDKSKKHRPTMLTTDLSLRLDPAYEKISRRFLENPDQFADAFARAWFKLTHRDMGPIQRYLGPLVPKETLIWQDPIPAVNHELVSDQDIAALKTKILASGLSVPELVSTAWASASTFRGSDKRGGANGARIRLSPQKDWEVNQPAQLSKVLGKLEAIQKEFNASAGAKKVSLADLIVLGGTAAVEKAAKDAGVDVKVAFTPGRMDASQEQTDAASFAPLEPRADGFRNYVGKRQQFLQQEEALVDRAQLLKLTGPELTVLVGGLRVLGANANGSKHGVLTAKVGALSNDFFVNLLDMSTQWAPAADGTYEARDRKTNAVKWTGTRADLIFGAHSQLRAYAEVYATSDSKEQFVKDFAKAWTKVMNLDRFDLAA.

The tryptophyl-tyrosyl-methioninium (Trp-Tyr) (with M-296) cross-link spans 148–270; that stretch reads WHSAGTYRIT…LGAVQMGLIY (123 aa). The active-site Proton acceptor is His149. Positions 270 to 296 form a cross-link, tryptophyl-tyrosyl-methioninium (Tyr-Met) (with W-148); sequence YVNPEGPNGKPDPIAAAKDIRETFFRM. Heme b is bound at residue His311.

The protein belongs to the peroxidase family. Peroxidase/catalase subfamily. As to quaternary structure, homodimer or homotetramer. The cofactor is heme b. In terms of processing, formation of the three residue Trp-Tyr-Met cross-link is important for the catalase, but not the peroxidase activity of the enzyme.

It catalyses the reaction H2O2 + AH2 = A + 2 H2O. It carries out the reaction 2 H2O2 = O2 + 2 H2O. Bifunctional enzyme with both catalase and broad-spectrum peroxidase activity. The protein is Catalase-peroxidase of Bradyrhizobium diazoefficiens (strain JCM 10833 / BCRC 13528 / IAM 13628 / NBRC 14792 / USDA 110).